The following is a 486-amino-acid chain: Aspartyl/glutamyl-tRNA(Asn/Gln) amidotransferase subunit B (486 aa).

Belongs to the GatB/GatE family. GatB subfamily. As to quaternary structure, heterotrimer of A, B and C subunits.

The enzyme catalyses L-glutamyl-tRNA(Gln) + L-glutamine + ATP + H2O = L-glutaminyl-tRNA(Gln) + L-glutamate + ADP + phosphate + H(+). It catalyses the reaction L-aspartyl-tRNA(Asn) + L-glutamine + ATP + H2O = L-asparaginyl-tRNA(Asn) + L-glutamate + ADP + phosphate + 2 H(+). Functionally, allows the formation of correctly charged Asn-tRNA(Asn) or Gln-tRNA(Gln) through the transamidation of misacylated Asp-tRNA(Asn) or Glu-tRNA(Gln) in organisms which lack either or both of asparaginyl-tRNA or glutaminyl-tRNA synthetases. The reaction takes place in the presence of glutamine and ATP through an activated phospho-Asp-tRNA(Asn) or phospho-Glu-tRNA(Gln). This Leptospira borgpetersenii serovar Hardjo-bovis (strain JB197) protein is Aspartyl/glutamyl-tRNA(Asn/Gln) amidotransferase subunit B.